A 271-amino-acid polypeptide reads, in one-letter code: Phosphonates import ATP-binding protein PhnC 2 (271 aa).

In terms of domain architecture, ABC transporter spans 2 to 245; it reads LVVEGLTCRF…IARELYDLEA (244 aa). 34–41 is a binding site for ATP; that stretch reads GRSGAGKS.

This sequence belongs to the ABC transporter superfamily. Phosphonates importer (TC 3.A.1.9.1) family. The complex is composed of two ATP-binding proteins (PhnC), two transmembrane proteins (PhnE) and a solute-binding protein (PhnD).

The protein localises to the cell inner membrane. The enzyme catalyses phosphonate(out) + ATP + H2O = phosphonate(in) + ADP + phosphate + H(+). In terms of biological role, part of the ABC transporter complex PhnCDE involved in phosphonates import. Responsible for energy coupling to the transport system. This chain is Phosphonates import ATP-binding protein PhnC 2, found in Rhodopseudomonas palustris (strain BisB18).